The chain runs to 320 residues: tRNA N6-adenosine threonylcarbamoyltransferase (320 aa).

Fe cation contacts are provided by H113 and H117. Substrate is bound by residues 143 to 147, D176, G189, D193, and N281; that span reads VVSGG. D305 contributes to the Fe cation binding site.

It belongs to the KAE1 / TsaD family. Fe(2+) is required as a cofactor.

The protein resides in the cytoplasm. It carries out the reaction L-threonylcarbamoyladenylate + adenosine(37) in tRNA = N(6)-L-threonylcarbamoyladenosine(37) in tRNA + AMP + H(+). In terms of biological role, required for the formation of a threonylcarbamoyl group on adenosine at position 37 (t(6)A37) in tRNAs that read codons beginning with adenine. Is involved in the transfer of the threonylcarbamoyl moiety of threonylcarbamoyl-AMP (TC-AMP) to the N6 group of A37, together with TsaE and TsaB. TsaD likely plays a direct catalytic role in this reaction. This Mycoplasmoides gallisepticum (strain R(low / passage 15 / clone 2)) (Mycoplasma gallisepticum) protein is tRNA N6-adenosine threonylcarbamoyltransferase.